Consider the following 314-residue polypeptide: Methionyl-tRNA formyltransferase (314 aa).

113-116 contacts (6S)-5,6,7,8-tetrahydrofolate; that stretch reads SLLP.

It belongs to the Fmt family.

The catalysed reaction is L-methionyl-tRNA(fMet) + (6R)-10-formyltetrahydrofolate = N-formyl-L-methionyl-tRNA(fMet) + (6S)-5,6,7,8-tetrahydrofolate + H(+). In terms of biological role, attaches a formyl group to the free amino group of methionyl-tRNA(fMet). The formyl group appears to play a dual role in the initiator identity of N-formylmethionyl-tRNA by promoting its recognition by IF2 and preventing the misappropriation of this tRNA by the elongation apparatus. This Pseudomonas syringae pv. tomato (strain ATCC BAA-871 / DC3000) protein is Methionyl-tRNA formyltransferase.